Here is a 90-residue protein sequence, read N- to C-terminus: uncharacterized protein (90 aa).

An Isoglutamyl lysine isopeptide (Lys-Gln) (interchain with Q-Cter in protein Pup) cross-link involves residue Lys88.

This is an uncharacterized protein from Mycolicibacterium smegmatis (strain ATCC 700084 / mc(2)155) (Mycobacterium smegmatis).